Here is a 21-residue protein sequence, read N- to C-terminus: Peptide PGLa-BM2 (21 aa).

Ala-21 carries the alanine amide modification.

As to expression, expressed by the skin glands.

It localises to the secreted. Functionally, antimicrobial peptide. The sequence is that of Peptide PGLa-BM2 from Xenopus boumbaensis (Mawa clawed frog).